A 307-amino-acid chain; its full sequence is Acetaldehyde dehydrogenase 2 (307 aa).

Residue 13-16 (SGNI) participates in NAD(+) binding. Cys-132 serves as the catalytic Acyl-thioester intermediate. NAD(+) is bound by residues 163-171 (SIGPGTRAN) and Asn-274.

This sequence belongs to the acetaldehyde dehydrogenase family.

It carries out the reaction acetaldehyde + NAD(+) + CoA = acetyl-CoA + NADH + H(+). In Methylibium petroleiphilum (strain ATCC BAA-1232 / LMG 22953 / PM1), this protein is Acetaldehyde dehydrogenase 2.